Consider the following 249-residue polypeptide: Protein YIPF4 (249 aa).

A compositionally biased stretch (pro residues) spans 1–15 (MQPPGPQQPPPPPLF). A disordered region spans residues 1 to 40 (MQPPGPQQPPPPPLFTPNNGDFTFVSSADAEDPSGSITTP). Residues 1 to 116 (MQPPGPQQPP…LGFNRQVVRD (116 aa)) lie on the Cytoplasmic side of the membrane. Polar residues predominate over residues 16–26 (TPNNGDFTFVS). The helical transmembrane segment at 117-137 (NPDFWGPLAVVLFFSMISLYG) threads the bilayer. Q138 is a topological domain (lumenal). A helical membrane pass occupies residues 139-159 (FKVVSWIITIWIFGSLTIFLL). Over 160–171 (ARVLGGEVAYGQ) the chain is Cytoplasmic. Residues 172–192 (VLGVIGYSLLPLIVIAPVLLV) form a helical membrane-spanning segment. Topologically, residues 193 to 200 (VGSFEVVS) are lumenal. Residues 201-221 (TLIKLFGVFWAAYSAASLLVG) traverse the membrane as a helical segment. The Cytoplasmic portion of the chain corresponds to 222–228 (EEFKTKK). Residues 229–249 (PLLIYPIFLLYIYFLSLYTGV) form a helical membrane-spanning segment.

The protein belongs to the YIP1 family.

It localises to the golgi apparatus. The protein localises to the cis-Golgi network membrane. Involved in the maintenance of the Golgi structure. The chain is Protein YIPF4 (YIPF4) from Gallus gallus (Chicken).